The primary structure comprises 198 residues: 3-isopropylmalate dehydratase small subunit (198 aa).

It belongs to the LeuD family. LeuD type 1 subfamily. Heterodimer of LeuC and LeuD.

The enzyme catalyses (2R,3S)-3-isopropylmalate = (2S)-2-isopropylmalate. Its pathway is amino-acid biosynthesis; L-leucine biosynthesis; L-leucine from 3-methyl-2-oxobutanoate: step 2/4. Catalyzes the isomerization between 2-isopropylmalate and 3-isopropylmalate, via the formation of 2-isopropylmaleate. The protein is 3-isopropylmalate dehydratase small subunit of Mycobacterium avium (strain 104).